The following is a 623-amino-acid chain: Putative disease resistance protein At5g47280 (623 aa).

NB-ARC domains follow at residues Leu-2–Ser-51 and Val-119–Val-249. Gly-16 to Thr-23 contacts ATP. 4 LRR repeats span residues Ser-488–Gln-511, Ala-512–Leu-534, Arg-536–Val-558, and Thr-560–Leu-581.

The protein belongs to the disease resistance NB-LRR family.

Functionally, potential disease resistance protein. The chain is Putative disease resistance protein At5g47280 from Arabidopsis thaliana (Mouse-ear cress).